The primary structure comprises 173 residues: ATP synthase subunit delta (173 aa).

It belongs to the ATPase delta chain family. As to quaternary structure, F-type ATPases have 2 components, F(1) - the catalytic core - and F(0) - the membrane proton channel. F(1) has five subunits: alpha(3), beta(3), gamma(1), delta(1), epsilon(1). F(0) has three main subunits: a(1), b(2) and c(10-14). The alpha and beta chains form an alternating ring which encloses part of the gamma chain. F(1) is attached to F(0) by a central stalk formed by the gamma and epsilon chains, while a peripheral stalk is formed by the delta and b chains.

Its subcellular location is the cell inner membrane. Its function is as follows. F(1)F(0) ATP synthase produces ATP from ADP in the presence of a proton or sodium gradient. F-type ATPases consist of two structural domains, F(1) containing the extramembraneous catalytic core and F(0) containing the membrane proton channel, linked together by a central stalk and a peripheral stalk. During catalysis, ATP synthesis in the catalytic domain of F(1) is coupled via a rotary mechanism of the central stalk subunits to proton translocation. Functionally, this protein is part of the stalk that links CF(0) to CF(1). It either transmits conformational changes from CF(0) to CF(1) or is implicated in proton conduction. The sequence is that of ATP synthase subunit delta from Campylobacter jejuni subsp. jejuni serotype O:2 (strain ATCC 700819 / NCTC 11168).